Reading from the N-terminus, the 894-residue chain is UPF0182 protein GSU2333 (894 aa).

The next 7 helical transmembrane spans lie at 6–26 (FLLI…LITF), 50–70 (VGAG…NLYF), 98–118 (MVQM…LLAG), 162–182 (KGFV…VYFF), 203–223 (LAIL…LDAV), 250–270 (ILTL…WKGA), and 275–295 (LIPP…YPAM).

This sequence belongs to the UPF0182 family.

It localises to the cell membrane. In Geobacter sulfurreducens (strain ATCC 51573 / DSM 12127 / PCA), this protein is UPF0182 protein GSU2333.